The primary structure comprises 274 residues: Dermonecrotic toxin SdSicTox-betaIIB1biv (274 aa).

His-5 is a catalytic residue. Positions 25 and 27 each coordinate Mg(2+). The active-site Nucleophile is His-41. 2 cysteine pairs are disulfide-bonded: Cys-45-Cys-51 and Cys-47-Cys-190. Asp-85 contacts Mg(2+).

Belongs to the arthropod phospholipase D family. Class II subfamily. Requires Mg(2+) as cofactor. As to expression, expressed by the venom gland.

It localises to the secreted. It carries out the reaction an N-(acyl)-sphingosylphosphocholine = an N-(acyl)-sphingosyl-1,3-cyclic phosphate + choline. It catalyses the reaction an N-(acyl)-sphingosylphosphoethanolamine = an N-(acyl)-sphingosyl-1,3-cyclic phosphate + ethanolamine. The catalysed reaction is a 1-acyl-sn-glycero-3-phosphocholine = a 1-acyl-sn-glycero-2,3-cyclic phosphate + choline. The enzyme catalyses a 1-acyl-sn-glycero-3-phosphoethanolamine = a 1-acyl-sn-glycero-2,3-cyclic phosphate + ethanolamine. Functionally, dermonecrotic toxins cleave the phosphodiester linkage between the phosphate and headgroup of certain phospholipids (sphingolipid and lysolipid substrates), forming an alcohol (often choline) and a cyclic phosphate. This toxin acts on sphingomyelin (SM). It may also act on ceramide phosphoethanolamine (CPE), lysophosphatidylcholine (LPC) and lysophosphatidylethanolamine (LPE), but not on lysophosphatidylserine (LPS), and lysophosphatidylglycerol (LPG). It acts by transphosphatidylation, releasing exclusively cyclic phosphate products as second products. Induces dermonecrosis, hemolysis, increased vascular permeability, edema, inflammatory response, and platelet aggregation. The protein is Dermonecrotic toxin SdSicTox-betaIIB1biv of Sicarius cf. damarensis (strain GJB-2008) (Six-eyed sand spider).